The following is a 1185-amino-acid chain: Chromosome partition protein Smc (1185 aa).

32-39 (PNGSGKSN) is a binding site for ATP. The stretch at 167–494 (ISKYKSRKMD…KLNEKNSHLS (328 aa)) forms a coiled coil. The 119-residue stretch at 521–639 (TGIIGVVADQ…TDLKSAIEIA (119 aa)) folds into the SMC hinge domain. Residues 677–1031 (RSRKIEDLKK…KVIQEIEETM (355 aa)) are a coiled coil.

The protein belongs to the SMC family. Homodimer.

It localises to the cytoplasm. In terms of biological role, required for chromosome condensation and partitioning. The polypeptide is Chromosome partition protein Smc (Halothermothrix orenii (strain H 168 / OCM 544 / DSM 9562)).